Here is a 1372-residue protein sequence, read N- to C-terminus: DNA-directed RNA polymerase subunit beta (1372 aa).

The protein belongs to the RNA polymerase beta chain family. The RNAP catalytic core consists of 2 alpha, 1 beta, 1 beta' and 1 omega subunit. When a sigma factor is associated with the core the holoenzyme is formed, which can initiate transcription.

The enzyme catalyses RNA(n) + a ribonucleoside 5'-triphosphate = RNA(n+1) + diphosphate. Functionally, DNA-dependent RNA polymerase catalyzes the transcription of DNA into RNA using the four ribonucleoside triphosphates as substrates. In Bradyrhizobium diazoefficiens (strain JCM 10833 / BCRC 13528 / IAM 13628 / NBRC 14792 / USDA 110), this protein is DNA-directed RNA polymerase subunit beta.